Here is a 638-residue protein sequence, read N- to C-terminus: Mediator of RNA polymerase II transcription subunit 17 (638 aa).

A disordered region spans residues 1–21; that stretch reads MSDSFNLPLRPLTEKRERPDP.

Belongs to the Mediator complex subunit 17 family. In terms of assembly, component of the Mediator complex.

It localises to the nucleus. Its function is as follows. Component of the Mediator complex, a coactivator involved in the regulated transcription of nearly all RNA polymerase II-dependent genes. Mediator functions as a bridge to convey information from gene-specific regulatory proteins to the basal RNA polymerase II transcription machinery. Mediator is recruited to promoters by direct interactions with regulatory proteins and serves as a scaffold for the assembly of a functional preinitiation complex with RNA polymerase II and the general transcription factors. This is Mediator of RNA polymerase II transcription subunit 17 (srb4) from Aspergillus oryzae (strain ATCC 42149 / RIB 40) (Yellow koji mold).